We begin with the raw amino-acid sequence, 317 residues long: Bile salt hydrolase/transferase (317 aa).

Cysteine 2 functions as the Nucleophile; acyl-thioester intermediate in the catalytic mechanism. 2 residues coordinate deoxycholate: cysteine 2 and arginine 18. Asparagine 82 lines the taurine pocket.

The protein belongs to the peptidase C59 family. Homotetramer. The tetramer consists of a dimer of dimers.

It catalyses the reaction glycocholate + H2O = cholate + glycine. The catalysed reaction is glycodeoxycholate + H2O = deoxycholate + glycine. The enzyme catalyses chenodeoxycholate + glycine = glycochenodeoxycholate + H2O. It carries out the reaction cholate + taurine = taurocholate + H2O. It catalyses the reaction taurodeoxycholate + H2O = deoxycholate + taurine. The catalysed reaction is taurochenodeoxycholate + H2O = chenodeoxycholate + taurine. The enzyme catalyses an L-alpha-amino acid + cholate = an N-choloyl-L-alpha-amino acid + H2O. It carries out the reaction an L-alpha-amino acid + taurocholate = an N-choloyl-L-alpha-amino acid + taurine. It catalyses the reaction cholate + L-alanine = L-alanocholate + H2O. The catalysed reaction is taurocholate + L-alanine = L-alanocholate + taurine. The enzyme catalyses cholate + L-serine = L-serocholate + H2O. It carries out the reaction taurocholate + L-serine = L-serocholate + taurine. It catalyses the reaction cholate + L-histidine = L-histidocholate + H2O. The catalysed reaction is taurocholate + L-histidine = L-histidocholate + taurine. Its pathway is lipid metabolism; bile acid biosynthesis. In terms of biological role, possesses dual functions in bile acid metabolism. Acts as a bile salt hydrolase that catalyzes the deconjugation of glycine- and taurine-linked bile salts, which occurs naturally in the intestines of humans, releasing amino acid residues and deconjugated bile salts (bile acids). Can hydrolyze the amide bond in all six major human conjugated bile salts, namely glycocholate (GCA), glycodeoxycholate (GDCA), glycochenodeoxycholate (GCDCA), taurocholate (TCA), taurodeoxycholate (TDCA) and taurochenodeoxycholate (TCDCA). Shows a slight preference for glycine-conjugated bile acids as substrates. Also acts as an amine N-acyltransferase that conjugates a wide variety of amino acids to conjugated and non-conjugated bile acids, thus producing bacterial bile acid amidates (BBAAs) - also named microbially conjugated bile acids (MCBAs) - in the gastrointestinal tract. These BBAAs may facilitate communication between the microbiota and host through the activation of human ligand-activated transcription factors. This Bifidobacterium longum subsp. longum (strain ATCC 15707 / DSM 20219 / JCM 1217 / NCTC 11818 / E194b) protein is Bile salt hydrolase/transferase.